The sequence spans 555 residues: CTP synthase (555 aa).

The segment at 1 to 265 is amidoligase domain; the sequence is MTRYIFITGG…GNRVCEKLNI (265 aa). Ser-13 serves as a coordination point for CTP. Position 13 (Ser-13) interacts with UTP. ATP is bound by residues 14–19 and Asp-71; that span reads SLGKGI. Mg(2+) is bound by residues Asp-71 and Glu-139. CTP-binding positions include 146 to 148, 186 to 191, and Lys-222; these read DIE and KTKPTQ. UTP is bound by residues 186–191 and Lys-222; that span reads KTKPTQ. The Glutamine amidotransferase type-1 domain occupies 290–541; it reads TVAVVGKYVD…IKAGLAAKEA (252 aa). An L-glutamine-binding site is contributed by Gly-351. Cys-378 acts as the Nucleophile; for glutamine hydrolysis in catalysis. L-glutamine is bound by residues 379–382, Glu-402, and Arg-469; that span reads LGMQ. Active-site residues include His-514 and Glu-516.

It belongs to the CTP synthase family. As to quaternary structure, homotetramer.

It catalyses the reaction UTP + L-glutamine + ATP + H2O = CTP + L-glutamate + ADP + phosphate + 2 H(+). The enzyme catalyses L-glutamine + H2O = L-glutamate + NH4(+). The catalysed reaction is UTP + NH4(+) + ATP = CTP + ADP + phosphate + 2 H(+). The protein operates within pyrimidine metabolism; CTP biosynthesis via de novo pathway; CTP from UDP: step 2/2. Allosterically activated by GTP, when glutamine is the substrate; GTP has no effect on the reaction when ammonia is the substrate. The allosteric effector GTP functions by stabilizing the protein conformation that binds the tetrahedral intermediate(s) formed during glutamine hydrolysis. Inhibited by the product CTP, via allosteric rather than competitive inhibition. Catalyzes the ATP-dependent amination of UTP to CTP with either L-glutamine or ammonia as the source of nitrogen. Regulates intracellular CTP levels through interactions with the four ribonucleotide triphosphates. The protein is CTP synthase of Coxiella burnetii (strain Dugway 5J108-111).